The primary structure comprises 120 residues: Small ribosomal subunit protein bS16 (120 aa).

The tract at residues 81 to 120 (GLAKRPTRNNPQKAEPGEKAKERAAKRAEKAAAPAEDAAA) is disordered. Residues 95–110 (EPGEKAKERAAKRAEK) are compositionally biased toward basic and acidic residues. The segment covering 111–120 (AAAPAEDAAA) has biased composition (low complexity).

This sequence belongs to the bacterial ribosomal protein bS16 family.

This chain is Small ribosomal subunit protein bS16, found in Methylorubrum extorquens (strain CM4 / NCIMB 13688) (Methylobacterium extorquens).